The sequence spans 175 residues: MSEQKIEVVGKLGSTYGIRGWLRLYSSTEKAESIFDYQPWFLKIKGQWQLIELESWRYHSNDLIVKLKGTEDREAAQLLTNAEIGVDLSVFPKLGEEDYYWHDLINCQVVNLENYTMGVVTELMETGSNDVLVVRANSKDAFGKQERLIPFLYKQVVKRVDLSTKTITVDWDAGF.

One can recognise a PRC barrel domain in the interval 96-175; it reads EEDYYWHDLI…TITVDWDAGF (80 aa).

Belongs to the RimM family. In terms of assembly, binds ribosomal protein uS19.

The protein resides in the cytoplasm. Its function is as follows. An accessory protein needed during the final step in the assembly of 30S ribosomal subunit, possibly for assembly of the head region. Essential for efficient processing of 16S rRNA. May be needed both before and after RbfA during the maturation of 16S rRNA. It has affinity for free ribosomal 30S subunits but not for 70S ribosomes. The chain is Ribosome maturation factor RimM from Haemophilus ducreyi (strain 35000HP / ATCC 700724).